The sequence spans 624 residues: Chaperone protein HtpG (624 aa).

Positions 1–336 are a; substrate-binding; that stretch reads MKGQETRGFQ…SNDLPLNVSR (336 aa). The b stretch occupies residues 337-552; that stretch reads EILQDSTVTR…ADEMGTQMAK (216 aa). Residues 553 to 624 are c; that stretch reads LFAAAGQAMP…IKRVNALLLG (72 aa).

Belongs to the heat shock protein 90 family. As to quaternary structure, homodimer.

The protein resides in the cytoplasm. In terms of biological role, molecular chaperone. Has ATPase activity. In Enterobacter sp. (strain 638), this protein is Chaperone protein HtpG.